We begin with the raw amino-acid sequence, 492 residues long: Protein nucleotidyltransferase YdiU (492 aa).

ATP contacts are provided by Gly88, Gly90, Arg91, Lys111, Asp123, Gly124, Arg174, and Arg181. Asp250 acts as the Proton acceptor in catalysis. Mg(2+) is bound by residues Asn251 and Asp260. Asp260 is an ATP binding site.

This sequence belongs to the SELO family. Requires Mg(2+) as cofactor. Mn(2+) serves as cofactor.

It carries out the reaction L-seryl-[protein] + ATP = 3-O-(5'-adenylyl)-L-seryl-[protein] + diphosphate. The enzyme catalyses L-threonyl-[protein] + ATP = 3-O-(5'-adenylyl)-L-threonyl-[protein] + diphosphate. It catalyses the reaction L-tyrosyl-[protein] + ATP = O-(5'-adenylyl)-L-tyrosyl-[protein] + diphosphate. The catalysed reaction is L-histidyl-[protein] + UTP = N(tele)-(5'-uridylyl)-L-histidyl-[protein] + diphosphate. It carries out the reaction L-seryl-[protein] + UTP = O-(5'-uridylyl)-L-seryl-[protein] + diphosphate. The enzyme catalyses L-tyrosyl-[protein] + UTP = O-(5'-uridylyl)-L-tyrosyl-[protein] + diphosphate. In terms of biological role, nucleotidyltransferase involved in the post-translational modification of proteins. It can catalyze the addition of adenosine monophosphate (AMP) or uridine monophosphate (UMP) to a protein, resulting in modifications known as AMPylation and UMPylation. The sequence is that of Protein nucleotidyltransferase YdiU from Rhodopseudomonas palustris (strain ATCC BAA-98 / CGA009).